The chain runs to 261 residues: Spermatogenesis-associated protein 46 (261 aa).

A disordered region spans residues 140–159 (SSSSSPENTCPREATKKSRH).

As to expression, testis-specific.

The protein resides in the nucleus membrane. In terms of biological role, plays a role in spermiogenesis and fertilization. The sequence is that of Spermatogenesis-associated protein 46 from Homo sapiens (Human).